The primary structure comprises 873 residues: Leucine--tRNA ligase (873 aa).

A 'HIGH' region motif is present at residues 47–57; that stretch reads PYPSGKLHMGH. A 'KMSKS' region motif is present at residues 636-640; it reads KMSKS. Lys-639 contributes to the ATP binding site.

The protein belongs to the class-I aminoacyl-tRNA synthetase family.

The protein resides in the cytoplasm. It catalyses the reaction tRNA(Leu) + L-leucine + ATP = L-leucyl-tRNA(Leu) + AMP + diphosphate. The polypeptide is Leucine--tRNA ligase (Acinetobacter baylyi (strain ATCC 33305 / BD413 / ADP1)).